The chain runs to 1194 residues: ATP-dependent RNA helicase DHX30 (1194 aa).

Residues 1 to 10 (MFSLDSFRKD) show a composition bias toward basic and acidic residues. The disordered stretch occupies residues 1-27 (MFSLDSFRKDRAQHRQRQCKLPPPRLP). Phosphoserine is present on serine 6. The region spanning 53–121 (PKNLLNSVIG…QAAAAACQLF (69 aa)) is the DRBM domain. The tract at residues 150–199 (ADSWWRPEPTMPPTSWRQLNPESIRPGGPGGLSRSLGREEEEDEEEELEE) is disordered. Residues 188 to 199 (EEEEDEEEELEE) are compositionally biased toward acidic residues. 2 positions are modified to phosphoserine: serine 226 and serine 380. The Helicase ATP-binding domain occupies 444-612 (LNAIEQHPVV…FGGCPVIKVP (169 aa)). 457 to 464 (GDTGCGKT) is an ATP binding site. Positions 559-562 (DEVH) match the DEAH box motif. The 174-residue stretch at 654–827 (LVTDLVLHID…NLVLQAKIHM (174 aa)) folds into the Helicase C-terminal domain.

Belongs to the DEAD box helicase family. DEAH subfamily. In terms of assembly, identified in a complex with TFAM and SSBP1. Interacts (via N-terminus) with ZC3HAV1 (via N-terminal domain) in an RNA-independent manner. Found in a complex with GRSF1, DDX28, FASTKD2 and FASTKD5.

The protein resides in the cytoplasm. It is found in the mitochondrion. Its subcellular location is the mitochondrion matrix. The protein localises to the mitochondrion nucleoid. The enzyme catalyses ATP + H2O = ADP + phosphate + H(+). Its function is as follows. RNA-dependent helicase. Plays an important role in the assembly of the mitochondrial large ribosomal subunit. Required for optimal function of the zinc-finger antiviral protein ZC3HAV1. Associates with mitochondrial DNA. Involved in nervous system development and differentiation through its involvement in the up-regulation of a number of genes which are required for neurogenesis, including GSC, NCAM1, neurogenin, and NEUROD. This Pongo abelii (Sumatran orangutan) protein is ATP-dependent RNA helicase DHX30 (DHX30).